Here is a 160-residue protein sequence, read N- to C-terminus: Cytochrome b6-f complex subunit 4 (160 aa).

Transmembrane regions (helical) follow at residues 36–56, 95–115, and 131–151; these read LLYIFPVCILGTIACCIGLGV, LLGVLSMAAVPIGLITVPFIE, and LVFLFGTFTAFWLGIGATMPI.

Belongs to the cytochrome b family. PetD subfamily. In terms of assembly, the 4 large subunits of the cytochrome b6-f complex are cytochrome b6, subunit IV (17 kDa polypeptide, petD), cytochrome f and the Rieske protein, while the 4 small subunits are petG, petL, petM and petN. The complex functions as a dimer.

Its subcellular location is the plastid. The protein localises to the chloroplast thylakoid membrane. Component of the cytochrome b6-f complex, which mediates electron transfer between photosystem II (PSII) and photosystem I (PSI), cyclic electron flow around PSI, and state transitions. The polypeptide is Cytochrome b6-f complex subunit 4 (Emiliania huxleyi (Coccolithophore)).